The following is a 437-amino-acid chain: Proline--tRNA ligase (437 aa).

The protein belongs to the class-II aminoacyl-tRNA synthetase family. ProS type 2 subfamily. As to quaternary structure, homodimer.

It is found in the cytoplasm. It carries out the reaction tRNA(Pro) + L-proline + ATP = L-prolyl-tRNA(Pro) + AMP + diphosphate. Catalyzes the attachment of proline to tRNA(Pro) in a two-step reaction: proline is first activated by ATP to form Pro-AMP and then transferred to the acceptor end of tRNA(Pro). This Acidiphilium cryptum (strain JF-5) protein is Proline--tRNA ligase.